The chain runs to 451 residues: Plasmepsin III (451 aa).

Residues 1–37 (MNLTIKEEDFTNTFMKNEESFNTFRVTKVKRWNAKRL) lie on the Cytoplasmic side of the membrane. Positions 1-123 (MNLTIKEEDF…KGLTKKSYLG (123 aa)) are excised as a propeptide. The helical; Signal-anchor for type II membrane protein transmembrane segment at 38 to 58 (FKILFVTVFIVLAGGFSYYIF) threads the bilayer. Over 59–451 (ENFVFQKNRK…TVGFALAKNL (393 aa)) the chain is Lumenal. Residues 139-446 (SFGEAKLGDN…DYDNHTVGFA (308 aa)) form the Peptidase A1 domain. Cystine bridges form between Cys170–Cys175 and Cys372–Cys408.

This sequence belongs to the peptidase A1 family. As to quaternary structure, probable homodimer; in the zymogen form. Monomer; in the active form. Acidification disrupts homodimerization. Component of the hemozoin formation complex (HFC) composed of falcipains FP2A and/or FP2B, plasmepsins PMII, PMIII/HAP and PMIV, heme detoxifying protein HDP and falcilysin FLN. The HFC complex is involved in hemoglobin degradation and detoxification of heme in the food vacuole during the asexual blood stage. Post-translationally, proteolytically cleaved into the soluble active mature form by cysteine proteases in the digestive vacuole of trophozoites. Proteolysis requires an acidic environment. Transprocessing may serve as an alternate activation system.

It localises to the membrane. The protein resides in the vacuole lumen. It carries out the reaction Hydrolysis of the bonds linking certain hydrophobic residues in hemoglobin or globin. Also cleaves small molecules substrates such as Ala-Leu-Glu-Arg-Thr-Phe-|-Phe(NO2)-Ser-Phe-Pro-Thr.. Its activity is regulated as follows. Dimerization causes loss of catalytic activity. Inhibited by pepstatin A. Inhibited by Zn(2+). Functionally, during the asexual blood stage, catalyzes the cleavage of denatured host hemoglobin (Hb) or globins. Digestion of host Hb is an essential step which provides the parasite with amino acids for protein synthesis, and regulates osmolarity. This chain is Plasmepsin III, found in Plasmodium falciparum (isolate 3D7).